The sequence spans 397 residues: tRNA (guanine-N(7)-)-methyltransferase non-catalytic subunit wuho (397 aa).

4 WD repeats span residues 75 to 115, 163 to 202, 206 to 244, and 303 to 343; these read KVEV…AQLL, GHLSIVYDVLWSEDQQYIITCDRDDKIRVTNYPATFDIHS, GHKEFVSGLAMLTEQHIISASGDKTLRVWNYTCGKELLL, and AGTW…RASG.

The protein belongs to the WD repeat TRM82 family. Forms a heterodimer with the catalytic subunit Mettl1. Interacts with mei-P26 and weakly interacts with bgcn; required for the function or formation of the mei-P26-bgcn-bam-sxl complex. Interacts with nanos; may be involved in mei-P26-dependent derepression of the BMP signaling pathway. Interacts with Myc; the interaction may be mediated by mei-P26 and may be involved in the regulation of ribosome biogenesis. As to expression, in testis, it is present at high level in hub cells, a niche for germline stem cells of testis. Ubiquitously expressed in all testicular cells throughout spermatogenesis. Ubiquitously expressed in all germline and somatic cells of the ovary.

The protein resides in the nucleus. Its subcellular location is the cytoplasm. It participates in tRNA modification; N(7)-methylguanine-tRNA biosynthesis. Its function is as follows. Required for the Mettl1-dependent formation of N(7)-methylguanine at position 46 (m7G46) in tRNA. In the Mettl1-wuho methyltransferase complex, it is required to stabilize and induce conformational changes of the catalytic subunit. Required for binding of nanos mRNA and repression of translation by the mei-P26-bgcn-bam-sxl complex. May cooperate with mei-P26 and nanos to derepress the BMP signaling pathway. May cooperate with mei-P26 to suppress expression of a subset of microRNAs. May cooperate with mei-P26 to regulate bam expression levels in germline cells during gametogenesis. Required to promote mitosis to meiosis transition during gametogenesis. May regulate germline cell division in part by regulating ribosome biogenesis. The chain is tRNA (guanine-N(7)-)-methyltransferase non-catalytic subunit wuho from Drosophila persimilis (Fruit fly).